The sequence spans 356 residues: UDP-N-acetylglucosamine--N-acetylmuramyl-(pentapeptide) pyrophosphoryl-undecaprenol N-acetylglucosamine transferase (356 aa).

UDP-N-acetyl-alpha-D-glucosamine is bound by residues Ser195 and Gln287.

The protein belongs to the glycosyltransferase 28 family. MurG subfamily.

The protein resides in the cell membrane. The enzyme catalyses Mur2Ac(oyl-L-Ala-gamma-D-Glu-L-Lys-D-Ala-D-Ala)-di-trans,octa-cis-undecaprenyl diphosphate + UDP-N-acetyl-alpha-D-glucosamine = beta-D-GlcNAc-(1-&gt;4)-Mur2Ac(oyl-L-Ala-gamma-D-Glu-L-Lys-D-Ala-D-Ala)-di-trans,octa-cis-undecaprenyl diphosphate + UDP + H(+). It participates in cell wall biogenesis; peptidoglycan biosynthesis. In terms of biological role, cell wall formation. Catalyzes the transfer of a GlcNAc subunit on undecaprenyl-pyrophosphoryl-MurNAc-pentapeptide (lipid intermediate I) to form undecaprenyl-pyrophosphoryl-MurNAc-(pentapeptide)GlcNAc (lipid intermediate II). The polypeptide is UDP-N-acetylglucosamine--N-acetylmuramyl-(pentapeptide) pyrophosphoryl-undecaprenol N-acetylglucosamine transferase (Streptococcus gordonii (strain Challis / ATCC 35105 / BCRC 15272 / CH1 / DL1 / V288)).